We begin with the raw amino-acid sequence, 66 residues long: Large ribosomal subunit protein bL35 (66 aa).

Residues 1 to 16 are compositionally biased toward basic residues; sequence MPKQKTHRASAKRFKR. The tract at residues 1-20 is disordered; the sequence is MPKQKTHRASAKRFKRTGNG.

Belongs to the bacterial ribosomal protein bL35 family.

The polypeptide is Large ribosomal subunit protein bL35 (Lactococcus lactis subsp. lactis (strain IL1403) (Streptococcus lactis)).